Here is a 364-residue protein sequence, read N- to C-terminus: Eukaryotic translation initiation factor 3 subunit H (364 aa).

The MPN domain maps to 13–162; the sequence is VQVDALVAIK…LRAYRLSPSF (150 aa).

This sequence belongs to the eIF-3 subunit H family. Component of the eukaryotic translation initiation factor 3 (eIF-3) complex.

It is found in the cytoplasm. Its function is as follows. Component of the eukaryotic translation initiation factor 3 (eIF-3) complex, which is involved in protein synthesis of a specialized repertoire of mRNAs and, together with other initiation factors, stimulates binding of mRNA and methionyl-tRNAi to the 40S ribosome. The eIF-3 complex specifically targets and initiates translation of a subset of mRNAs involved in cell proliferation. In Phaeosphaeria nodorum (strain SN15 / ATCC MYA-4574 / FGSC 10173) (Glume blotch fungus), this protein is Eukaryotic translation initiation factor 3 subunit H.